The sequence spans 1477 residues: Neuralized-like protein 4 (1477 aa).

Disordered stretches follow at residues 1 to 26 (MAELHPRTGKLISLSNGNRTAARKQP) and 168 to 196 (QPPPEEEEEEDAEEQEGSLVPLGQSRPDK). In terms of domain architecture, NHR 1 spans 1-167 (MAELHPRTGK…KCTQITVLSC (167 aa)). Residues 171–183 (PEEEEEEDAEEQE) are compositionally biased toward acidic residues. 4 consecutive NHR domains span residues 250 to 417 (ALLF…IVHN), 450 to 616 (QLLF…IMDE), 645 to 813 (DLRF…LTGG), and 841 to 1010 (SHRF…TVSS). Residues 1012–1041 (LLEEPDATKPPSITSESEEEEDPADHGDPH) are disordered. Positions 1048–1211 (SLQFLANHGK…QCEQVSIVTG (164 aa)) constitute an NHR 6 domain.

Post-translationally, ubiquitinated. This ubiquitination leads to proteasomal degradation.

The protein resides in the cytoplasm. The protein localises to the cytoskeleton. It localises to the microtubule organizing center. Its subcellular location is the centrosome. It is found in the centriole. Its function is as follows. Promotes CCP110 ubiquitination and proteasome-dependent degradation. By counteracting accumulation of CP110, maintains normal centriolar homeostasis and preventing formation of ectopic microtubular organizing centers. This is Neuralized-like protein 4 (neurl4) from Xenopus tropicalis (Western clawed frog).